Here is a 381-residue protein sequence, read N- to C-terminus: Protein kinase gsk31 (381 aa).

The 285-residue stretch at 25 to 309 (YEPCRVLGSG…AIEVLTHPFF (285 aa)) folds into the Protein kinase domain. ATP-binding positions include 31–39 (LGSGSFGVV) and K54. Residue D150 is the Proton acceptor of the active site. S184 carries the phosphoserine modification. Y185 is modified (phosphotyrosine).

The protein belongs to the protein kinase superfamily. CMGC Ser/Thr protein kinase family. GSK-3 subfamily.

The enzyme catalyses L-seryl-[protein] + ATP = O-phospho-L-seryl-[protein] + ADP + H(+). The catalysed reaction is L-threonyl-[protein] + ATP = O-phospho-L-threonyl-[protein] + ADP + H(+). The sequence is that of Protein kinase gsk31 (gsk31) from Schizosaccharomyces pombe (strain 972 / ATCC 24843) (Fission yeast).